We begin with the raw amino-acid sequence, 296 residues long: Phosphoribosylaminoimidazole-succinocarboxamide synthase (296 aa).

The protein belongs to the SAICAR synthetase family.

It carries out the reaction 5-amino-1-(5-phospho-D-ribosyl)imidazole-4-carboxylate + L-aspartate + ATP = (2S)-2-[5-amino-1-(5-phospho-beta-D-ribosyl)imidazole-4-carboxamido]succinate + ADP + phosphate + 2 H(+). It participates in purine metabolism; IMP biosynthesis via de novo pathway; 5-amino-1-(5-phospho-D-ribosyl)imidazole-4-carboxamide from 5-amino-1-(5-phospho-D-ribosyl)imidazole-4-carboxylate: step 1/2. The polypeptide is Phosphoribosylaminoimidazole-succinocarboxamide synthase (Citrifermentans bemidjiense (strain ATCC BAA-1014 / DSM 16622 / JCM 12645 / Bem) (Geobacter bemidjiensis)).